The sequence spans 343 residues: Putative kinase HI_0665 (343 aa).

Aspartate 209 functions as the Proton acceptor in the catalytic mechanism.

It belongs to the HipA Ser/Thr kinase family.

This Haemophilus influenzae (strain ATCC 51907 / DSM 11121 / KW20 / Rd) protein is Putative kinase HI_0665.